A 131-amino-acid chain; its full sequence is Phosphoribosyl-AMP cyclohydrolase (131 aa).

Residue Asp-90 coordinates Mg(2+). Cys-91 contacts Zn(2+). The Mg(2+) site is built by Asp-92 and Asp-94. Zn(2+) contacts are provided by Cys-107 and Cys-114.

Belongs to the PRA-CH family. As to quaternary structure, homodimer. Requires Mg(2+) as cofactor. Zn(2+) serves as cofactor.

It is found in the cytoplasm. It carries out the reaction 1-(5-phospho-beta-D-ribosyl)-5'-AMP + H2O = 1-(5-phospho-beta-D-ribosyl)-5-[(5-phospho-beta-D-ribosylamino)methylideneamino]imidazole-4-carboxamide. It participates in amino-acid biosynthesis; L-histidine biosynthesis; L-histidine from 5-phospho-alpha-D-ribose 1-diphosphate: step 3/9. Its function is as follows. Catalyzes the hydrolysis of the adenine ring of phosphoribosyl-AMP. This Hyphomonas neptunium (strain ATCC 15444) protein is Phosphoribosyl-AMP cyclohydrolase.